A 112-amino-acid chain; its full sequence is Large ribosomal subunit protein eL36y (112 aa).

A compositionally biased stretch (basic residues) spans 79-88 (KLGTHKRAKR). A disordered region spans residues 79-112 (KLGTHKRAKRKREEMSSVLRKMRSGGGGATEKKK). Residues 102–112 (SGGGGATEKKK) show a composition bias toward gly residues.

It belongs to the eukaryotic ribosomal protein eL36 family.

This Arabidopsis thaliana (Mouse-ear cress) protein is Large ribosomal subunit protein eL36y (RPL36B).